We begin with the raw amino-acid sequence, 131 residues long: Large ribosomal subunit protein bL12c (131 aa).

Residues glutamine 107 to serine 131 form a disordered region. Residues serine 110–serine 131 are compositionally biased toward basic and acidic residues.

The protein belongs to the bacterial ribosomal protein bL12 family. Homodimer. Part of the ribosomal stalk of the 50S ribosomal subunit. Forms a multimeric L10(L12)X complex, where L10 forms an elongated spine to which 2 to 4 L12 dimers bind in a sequential fashion. Binds GTP-bound translation factors.

It is found in the plastid. Its subcellular location is the chloroplast. In terms of biological role, forms part of the ribosomal stalk which helps the ribosome interact with GTP-bound translation factors. Is thus essential for accurate translation. This Chlorella vulgaris (Green alga) protein is Large ribosomal subunit protein bL12c.